The sequence spans 397 residues: Phosphoglycerate kinase (397 aa).

Residues 21–23 (DFN), Arg-37, 60–63 (HLGR), Arg-119, and Arg-152 contribute to the substrate site. ATP-binding positions include Lys-203, Gly-294, Glu-325, and 354 to 357 (GGDS).

It belongs to the phosphoglycerate kinase family. Monomer.

It localises to the cytoplasm. It carries out the reaction (2R)-3-phosphoglycerate + ATP = (2R)-3-phospho-glyceroyl phosphate + ADP. It participates in carbohydrate degradation; glycolysis; pyruvate from D-glyceraldehyde 3-phosphate: step 2/5. This chain is Phosphoglycerate kinase, found in Chlorobium phaeobacteroides (strain DSM 266 / SMG 266 / 2430).